Here is a 191-residue protein sequence, read N- to C-terminus: Protein Ves (191 aa).

The protein belongs to the Ves family.

The protein is Protein Ves of Shigella flexneri serotype 5b (strain 8401).